The following is a 55-amino-acid chain: MEFTTAMLGASLISTTSTQSKHNLVNNCCCSSSTSESSMPASCACTKCGCKTCKC.

Belongs to the metallothionein superfamily. Type 11 family.

This is Metallothionein-3 (MTP3) from Yarrowia lipolytica (strain CLIB 122 / E 150) (Yeast).